The sequence spans 220 residues: Putative phosphatase YhcW (220 aa).

Residue Asp8 is the Nucleophile of the active site. A divalent metal cation-binding residues include Asp8, Asp10, and Asp166. The Proton donor role is filled by Asp10.

This sequence belongs to the HAD-like hydrolase superfamily. CbbY/CbbZ/Gph/YieH family. Requires a divalent metal cation as cofactor.

This is Putative phosphatase YhcW (yhcW) from Bacillus subtilis (strain 168).